A 221-amino-acid chain; its full sequence is Carbonic anhydrase (221 aa).

Residues Cys38, Asp40, His99, and Cys102 each coordinate Zn(2+).

The protein belongs to the beta-class carbonic anhydrase family. The cofactor is Zn(2+).

The enzyme catalyses hydrogencarbonate + H(+) = CO2 + H2O. This Helicobacter pylori (strain ATCC 700392 / 26695) (Campylobacter pylori) protein is Carbonic anhydrase (cynT).